The following is a 421-amino-acid chain: Serine hydroxymethyltransferase (421 aa).

(6S)-5,6,7,8-tetrahydrofolate is bound by residues Leu-121 and 125 to 127 (GHL). Lys-229 is subject to N6-(pyridoxal phosphate)lysine.

It belongs to the SHMT family. In terms of assembly, homodimer. Pyridoxal 5'-phosphate serves as cofactor.

It localises to the cytoplasm. It carries out the reaction (6R)-5,10-methylene-5,6,7,8-tetrahydrofolate + glycine + H2O = (6S)-5,6,7,8-tetrahydrofolate + L-serine. Its pathway is one-carbon metabolism; tetrahydrofolate interconversion. The protein operates within amino-acid biosynthesis; glycine biosynthesis; glycine from L-serine: step 1/1. Its function is as follows. Catalyzes the reversible interconversion of serine and glycine with tetrahydrofolate (THF) serving as the one-carbon carrier. This reaction serves as the major source of one-carbon groups required for the biosynthesis of purines, thymidylate, methionine, and other important biomolecules. Also exhibits THF-independent aldolase activity toward beta-hydroxyamino acids, producing glycine and aldehydes, via a retro-aldol mechanism. The sequence is that of Serine hydroxymethyltransferase from Haemophilus influenzae (strain PittEE).